The primary structure comprises 471 residues: Putative multidrug resistance protein MdtD (471 aa).

The Periplasmic segment spans residues 1 to 11; sequence MTDLPDSTRWQ. The chain crosses the membrane as a helical span at residues 12–32; it reads LWIVAFGFFMQSLDTTIVNTA. Residues 33 to 48 lie on the Cytoplasmic side of the membrane; sequence LPSMAQSLGESPLHMH. Residues 49–69 form a helical membrane-spanning segment; it reads MVIVSYVLTVAVMLPASGWLA. Residues 70–76 are Periplasmic-facing; it reads DKVGVRN. Residues 77-97 form a helical membrane-spanning segment; that stretch reads IFFTAIVLFTLGSLFCALSGT. At 98–101 the chain is on the cytoplasmic side; that stretch reads LNEL. Residues 102–124 form a helical membrane-spanning segment; it reads LLARALQGVGGAMMVPVGRLTVM. Residues 125-137 lie on the Periplasmic side of the membrane; the sequence is KIVPREQYMAAMT. A helical transmembrane segment spans residues 138–158; it reads FVTLPGQVGPLLGPALGGLLV. At 159–164 the chain is on the cytoplasmic side; that stretch reads EYASWH. A helical transmembrane segment spans residues 165–185; that stretch reads WIFLINIPVGIIGAIATLMLM. The Periplasmic segment spans residues 186 to 196; that stretch reads PNYTMQTRRFD. Residues 197-217 traverse the membrane as a helical segment; the sequence is LSGFLLLAVGMAVLTLALDGS. The Cytoplasmic segment spans residues 218–224; the sequence is KGTGLSP. The helical transmembrane segment at 225 to 245 threads the bilayer; sequence LAIAGLVAVGVVALVLYLLHA. The Periplasmic portion of the chain corresponds to 246–262; the sequence is RNNNRALFSLKLFRTRT. The helical transmembrane segment at 263–283 threads the bilayer; it reads FSLGLAGSFAGRIGSGMLPFM. At 284-285 the chain is on the cytoplasmic side; the sequence is TP. Residues 286-306 form a helical membrane-spanning segment; it reads VFLQIGLGFSPFHAGLMMIPM. The Periplasmic segment spans residues 307-341; that stretch reads VLGSMGMKRIVVQVVNRFGYRRVLVATTLGLSLVT. The helical transmembrane segment at 342 to 362 threads the bilayer; the sequence is LLFMTTALLGWYYVLPFVLFL. The Cytoplasmic portion of the chain corresponds to 363–395; sequence QGMVNSTRFSSMNTLTLKDLPDNLASSGNSLLS. The chain crosses the membrane as a helical span at residues 396–416; sequence MIMQLSMSIGVTIAGLLLGLF. Residues 417 to 430 lie on the Periplasmic side of the membrane; the sequence is GSQHVSVDSGTTQT. A helical membrane pass occupies residues 431–451; it reads VFMYTWLSMAFIIALPAFIFA. The Cytoplasmic portion of the chain corresponds to 452–471; that stretch reads RVPNDTHQNVAISRRKRSAQ.

Belongs to the major facilitator superfamily. TCR/Tet family.

It is found in the cell inner membrane. This Escherichia coli (strain SMS-3-5 / SECEC) protein is Putative multidrug resistance protein MdtD.